A 562-amino-acid chain; its full sequence is Phosphoglucomutase-1 (562 aa).

At Met1 the chain carries N-acetylmethionine. The residue at position 16 (Lys16) is an N6-acetyllysine. Arg23 is an alpha-D-glucose 1,6-bisphosphate binding site. Residue Thr115 is modified to Phosphothreonine. Ser117 is a binding site for alpha-D-glucose 1,6-bisphosphate. Ser117 functions as the Phosphoserine intermediate in the catalytic mechanism. Ser117 provides a ligand contact to Mg(2+). Ser117 and Ser134 each carry phosphoserine. Thr185 bears the Phosphothreonine mark. A phosphoserine mark is found at Ser206 and Ser213. Residues Asp288, Asp290, and Asp292 each coordinate Mg(2+). Asp292 and Arg293 together coordinate alpha-D-glucose 1,6-bisphosphate. Lys349 bears the N6-acetyllysine mark. Tyr353 is subject to Phosphotyrosine. Residue Thr357 participates in alpha-D-glucose 1,6-bisphosphate binding. The residue at position 369 (Ser369) is a Phosphoserine. Positions 376, 378, and 389 each coordinate alpha-D-glucose 1,6-bisphosphate. Ser378 carries the phosphoserine modification. An N6-succinyllysine modification is found at Lys419. At Thr467 the chain carries Phosphothreonine; by PAK1. Residues Ser477, Ser485, and Ser505 each carry the phosphoserine modification. Thr507 carries the phosphothreonine modification. Phosphoserine occurs at positions 509 and 541.

This sequence belongs to the phosphohexose mutase family. In terms of assembly, monomer. Requires Mg(2+) as cofactor. Post-translationally, phosphorylation at Thr-467 by PAK1 significantly enhances enzymatic activity.

The protein localises to the cytoplasm. It carries out the reaction alpha-D-glucose 1-phosphate = alpha-D-glucose 6-phosphate. It catalyses the reaction O-phospho-L-seryl-[protein] + alpha-D-glucose 1-phosphate = alpha-D-glucose 1,6-bisphosphate + L-seryl-[protein]. The enzyme catalyses alpha-D-glucose 1,6-bisphosphate + L-seryl-[protein] = O-phospho-L-seryl-[protein] + alpha-D-glucose 6-phosphate. In terms of biological role, catalyzes the reversible isomerization of alpha-D-glucose 1-phosphate to alpha-D-glucose 6-phosphate. The mechanism proceeds via the intermediate compound alpha-D-glucose 1,6-bisphosphate. This enzyme participates in both the breakdown and synthesis of glucose. The polypeptide is Phosphoglucomutase-1 (PGM1) (Macaca fascicularis (Crab-eating macaque)).